Reading from the N-terminus, the 3637-residue chain is Replicase polyprotein 1ab (3637 aa).

The C4-type; atypical zinc-finger motif lies at 8-28 (CLCTPNARVFWERGQVYCTRC). In terms of domain architecture, Peptidase C31 spans 69–181 (ECRPGGMCWL…KGLCPFADAR (113 aa)). The PCP1-alpha stretch occupies residues 69–183 (ECRPGGMCWL…LCPFADARAN (115 aa)). Residues Cys76 and His147 each act as for Nsp1-alpha papain-like cysteine proteinase activity in the active site. The PCP1-beta stretch occupies residues 262–380 (RDTKFSKCWE…KFRFQTRKYY (119 aa)). The 120-residue stretch at 262–381 (RDTKFSKCWE…FRFQTRKYYG (120 aa)) folds into the Peptidase C32 domain. Active-site for Nsp1-beta papain-like cysteine proteinase activity residues include Cys269 and His340. The Peptidase C33 domain maps to 381 to 486 (GYSPPGDGAC…RGVCGECEMG (106 aa)). Residues Cys390 and His456 each act as for Nsp2 cysteine proteinase activity in the active site. Disordered regions lie at residues 676–743 (CKPK…AALK) and 865–899 (QQKT…GVSL). The segment covering 678 to 689 (PKRKRSRKKKTR) has biased composition (basic residues). Basic and acidic residues-rich tracts occupy residues 714-727 (DTRE…KAEK) and 873-895 (GERE…KRDL). Helical transmembrane passes span 940-960 (WLNH…SFIF), 981-1001 (VLLC…CVFG), 1083-1103 (FYFL…AVAL), 1287-1307 (IADF…SAWL), 1362-1382 (ALMV…SLLV), 1390-1410 (CLLM…PFVL), and 1423-1443 (VQFF…VVLI). An HD1 region spans residues 979 to 1103 (CCVLLCFYLP…LGLVFLAVAL (125 aa)). The segment at 1287 to 1446 (IADFVCLGLY…ASVVVLISSW (160 aa)) is HD2. A Peptidase S32 domain is found at 1511–1712 (GSLRTRGCAK…AVVESLPALE (202 aa)). Active-site charge relay system; for 3C-like serine proteinase activity residues include His1549, Asp1574, and Ser1626. 5 helical membrane passes run 1735-1755 (DVPV…VMLA), 1761-1781 (FALS…AVAF), 1801-1821 (LVIA…LGQL), 1824-1844 (CCLM…LYLG), and 1853-1873 (EIFF…SLFK). An HD3 region spans residues 1735 to 1872 (DVPVIRIAFF…MFLPLFLSLF (138 aa)). A NiRAN domain is found at 2214-2372 (SLNGLQQASA…LPYKLHPVRG (159 aa)). Residues 2611 to 2745 (GRCLEADLAS…YDESSELPNY (135 aa)) form the RdRp catalytic domain. The AV ZBD domain occupies 2865–2928 (KKKCRTCAHC…SPVMSLNTEL (64 aa)). Positions 2871, 2874, 2884, 2889, 2892, 2894, 2896, 2898, 2905, 2907, 2914, and 2917 each coordinate Zn(2+). Residues 2985 to 3137 (QVMKVAQTCA…AFALMLGRQL (153 aa)) form the (+)RNA virus helicase ATP-binding domain. Residue 3013–3020 (GAPGTGKT) participates in ATP binding. In terms of domain architecture, (+)RNA virus helicase C-terminal spans 3138–3269 (IEVFRFGPSI…CGEQPMMISE (132 aa)). One can recognise an AV-Nsp11N/CoV-Nsp15M domain in the interval 3293–3389 (EGTASPLPQV…LTKFLKGKPV (97 aa)). A NendoU domain is found at 3391–3513 (LPDSLMSTGR…MVWKDATAYF (123 aa)). Catalysis depends on residues His3422, His3437, and Lys3466.

It belongs to the arteriviridae polyprotein family. In terms of processing, specific enzymatic cleavages in vivo by its own proteases yield mature proteins. There are two alternative pathways for processing. Either nsp4-5 is cleaved, which represents the major pathway or the nsp5-6 and nsp6-7 are processed, which represents the minor pathway. The major pathway occurs when nsp2 acts as a cofactor for nsp4.

The protein localises to the host membrane. Its subcellular location is the host cytoplasm. It is found in the host perinuclear region. The catalysed reaction is RNA(n) + a ribonucleoside 5'-triphosphate = RNA(n+1) + diphosphate. It carries out the reaction ATP + H2O = ADP + phosphate + H(+). It catalyses the reaction uridylyl-uridylyl-ribonucleotide-RNA = a 3'-end uridylyl-2',3'-cyclophospho-uridine-RNA + a 5'-end dephospho-ribonucleoside-RNA. Its function is as follows. The replicase polyprotein 1ab is a multifunctional protein: it contains the activities necessary for the transcription of negative stranded RNA, leader RNA, subgenomic mRNAs and progeny virion RNA as well as proteinases responsible for the cleavage of the polyprotein into functional products. The Nsp1 chain is essential for viral subgenomic mRNA synthesis. Functionally, the 3C-like serine proteinase chain is responsible for the majority of cleavages as it cleaves the C-terminus of the polyprotein. In terms of biological role, the helicase chain, which contains a zinc finger structure, displays RNA and DNA duplex-unwinding activities with 5' to 3' polarity. Its function is as follows. Plays a role in viral transcription/replication and prevents the simultaneous activation of host cell dsRNA sensors, such as MDA5/IFIH1, OAS, and PKR. Acts by degrading the 5'-polyuridines generated during replication of the poly(A) region of viral genomic and subgenomic RNAs. Catalyzes a two-step reaction in which a 2'3'-cyclic phosphate (2'3'-cP) is first generated by 2'-O transesterification, which is then hydrolyzed to a 3'-phosphate (3'-P). If not degraded, poly(U) RNA would hybridize with poly(A) RNA tails and activate host dsRNA sensors. This chain is Replicase polyprotein 1ab (rep), found in Mus musculus domesticus (western European house mouse).